The sequence spans 632 residues: Galactan 5-O-arabinofuranosyltransferase (632 aa).

The next 13 membrane-spanning stretches (helical) occupy residues 10–30, 45–65, 76–96, 162–182, 184–204, 206–226, 242–259, 263–282, 298–318, 344–364, 375–395, 409–429, and 434–454; these read QIVLAAVVASGVAAVSLIAIA, ALTTVGQVGCLTGLLAVGGVW, LGGLVFVSAFTVVTLGMPLGA, WAITSITIAVAITLVLWWQMI, FEYALLVTIATAAVTLVYSSP, PYAAMITVLLPPALVLTWSGL, GWATVVGAGIFLGFAATW, LLAYTAFTVVLMTLLLATAL, LAGIVVIAAAIGAITWLPFLA, FPMLQFSLLGMICMLGTLWLI, ALMISVLAVYLWSLLSILTTL, LTVLLVTAGVFGFIETAQSLA, and AVLSVASAIGLAGAIAFSQDI. At 455–632 the chain is on the extracellular side; it reads PNVLRPDLTI…LAIRKPMGNA (178 aa).

It belongs to the glycosyltransferase 85 family.

The protein localises to the cell membrane. It catalyses the reaction Adds an alpha-D-arabinofuranosyl group from trans,octacis-decaprenylphospho-beta-D-arabinofuranose at the 5-O-position of the eighth, tenth and twelfth galactofuranose unit of the galactofuranan chain of [beta-D-galactofuranosyl-(1-&gt;5)-beta-D-galactofuranosyl-(1-&gt;6)]14-beta-D-galactofuranosyl-(1-&gt;5)-beta-D-galactofuranosyl-(1-&gt;4)-alpha-L-rhamnopyranosyl-(1-&gt;3)-N-acetyl-alpha-D-glucosaminyl-diphospho-trans,octacis-decaprenol.. The protein operates within cell wall biogenesis; cell wall polysaccharide biosynthesis. In terms of biological role, involved in the biosynthesis of the arabinogalactan (AG) region of the mycolylarabinogalactan-peptidoglycan (mAGP) complex, an essential component of the mycobacterial cell wall. Catalyzes the addition of the first key arabinofuranosyl (Araf) residue from the sugar donor decaprenyl-phospho-arabinose (DPA) on the C-5 of a 6-linked galactofuranosyl (Galf) of the galactan domain, thus 'priming' the galactan for further elaboration by other arabinofuranosyltransferases. The sequence is that of Galactan 5-O-arabinofuranosyltransferase from Mycobacterium leprae (strain TN).